Reading from the N-terminus, the 342-residue chain is Isopentenyl-diphosphate delta-isomerase (342 aa).

11–12 (RK) lines the substrate pocket. FMN is bound by residues S68, 69 to 71 (SMT), S99, and N128. 99–101 (SQR) lines the substrate pocket. Residue Q162 participates in substrate binding. E163 contacts Mg(2+). FMN is bound by residues K194, S219, T224, 275-277 (GVR), and 296-297 (AK).

Belongs to the IPP isomerase type 2 family. In terms of assembly, homooctamer. Dimer of tetramers. The cofactor is FMN. NADPH is required as a cofactor. Requires Mg(2+) as cofactor.

The protein resides in the cytoplasm. The enzyme catalyses isopentenyl diphosphate = dimethylallyl diphosphate. Its function is as follows. Involved in the biosynthesis of isoprenoids. Catalyzes the 1,3-allylic rearrangement of the homoallylic substrate isopentenyl (IPP) to its allylic isomer, dimethylallyl diphosphate (DMAPP). This chain is Isopentenyl-diphosphate delta-isomerase, found in Legionella pneumophila (strain Corby).